The sequence spans 127 residues: Small ribosomal subunit protein uS11 (127 aa).

This sequence belongs to the universal ribosomal protein uS11 family. As to quaternary structure, part of the 30S ribosomal subunit. Interacts with proteins S7 and S18. Binds to IF-3.

In terms of biological role, located on the platform of the 30S subunit, it bridges several disparate RNA helices of the 16S rRNA. Forms part of the Shine-Dalgarno cleft in the 70S ribosome. This Nitrosococcus oceani (strain ATCC 19707 / BCRC 17464 / JCM 30415 / NCIMB 11848 / C-107) protein is Small ribosomal subunit protein uS11.